The following is a 616-amino-acid chain: UDP-sugar pyrophosphorylase (616 aa).

It belongs to the USP family. The cofactor is Mg(2+). It depends on Mn(2+) as a cofactor.

It carries out the reaction a monosaccharide 1-phosphate + UTP + H(+) = a UDP-monosaccharide + diphosphate. May function as the terminal enzyme of the myo-inositol oxidation (MIO) pathway. May also play a role in the salvage pathway for synthesis of nucleotide sugars. The sequence is that of UDP-sugar pyrophosphorylase (USP) from Oryza sativa subsp. japonica (Rice).